The sequence spans 406 residues: Exo-alpha-sialidase (406 aa).

Residues 1-20 (MQSMRFMILALLVQFLPAWA) form the signal peptide. Residues arginine 59, arginine 78, aspartate 84, and glutamine 148 each coordinate substrate. The N-linked (GlcNAc...) asparagine glycan is linked to asparagine 235. Residues arginine 265, arginine 322, 322–323 (RR), 331–332 (YD), lysine 337, tyrosine 358, aspartate 376, and 376–378 (DFF) contribute to the substrate site. An N-linked (GlcNAc...) asparagine glycan is attached at asparagine 396.

The protein belongs to the glycosyl hydrolase 33 family.

The catalysed reaction is Hydrolysis of alpha-(2-&gt;3)-, alpha-(2-&gt;6)-, alpha-(2-&gt;8)- glycosidic linkages of terminal sialic acid residues in oligosaccharides, glycoproteins, glycolipids, colominic acid and synthetic substrates.. In terms of biological role, sialidase is able to release sialic acid from a wide variety of natural substrates including bovine salivary mucin, colominic acid, bovine fetuin, a serum glycoprotein containing both alpha-2-6 and alpha-2-3-linkages in a ratio of about 3:2, and glycoproteins and glycolipids from thermally denatured human lung epithelial cells. Does not show any trans-sialidase activity since it is able to remove terminal sialic acid residues but is unable to catalyze their transfer to the acceptor substrate. 2-keto-3-deoxynononic acid (KDN) is the preferred substrate and A.fumigatus can utilize KDN as a sole carbon source. The polypeptide is Exo-alpha-sialidase (Aspergillus fumigatus (strain ATCC MYA-4609 / CBS 101355 / FGSC A1100 / Af293) (Neosartorya fumigata)).